The following is a 306-amino-acid chain: Pantothenate kinase (306 aa).

Residue 90-97 (GSVAVGKS) coordinates ATP.

This sequence belongs to the prokaryotic pantothenate kinase family.

Its subcellular location is the cytoplasm. It carries out the reaction (R)-pantothenate + ATP = (R)-4'-phosphopantothenate + ADP + H(+). The protein operates within cofactor biosynthesis; coenzyme A biosynthesis; CoA from (R)-pantothenate: step 1/5. The sequence is that of Pantothenate kinase from Lactococcus lactis subsp. cremoris (strain SK11).